The chain runs to 145 residues: 3-dehydroquinate dehydratase (145 aa).

Residue Tyr22 is the Proton acceptor of the active site. Residues Asn71, His77, and Asp84 each contribute to the substrate site. The active-site Proton donor is His97. Substrate is bound by residues 98-99 (LS) and Arg108.

It belongs to the type-II 3-dehydroquinase family. In terms of assembly, homododecamer.

The enzyme catalyses 3-dehydroquinate = 3-dehydroshikimate + H2O. It participates in metabolic intermediate biosynthesis; chorismate biosynthesis; chorismate from D-erythrose 4-phosphate and phosphoenolpyruvate: step 3/7. In terms of biological role, catalyzes a trans-dehydration via an enolate intermediate. This is 3-dehydroquinate dehydratase from Francisella tularensis subsp. tularensis (strain WY96-3418).